The chain runs to 248 residues: MEQFKGLQKSLYIWTDSGELDKRVQALKEATGGEVAVENVHRLSFSSYANSSFDLIVIECAQLTDNYVKLLHMLKPSGKLHLFAYIGPAANLLQEIKLSGFINCSEDAAANTLTAEKPGYETGSSARLSFAKKSPSMNVWKISGDDEELIDEEELLDEEDKQKPDPAGLRVCSTTGKRKACKNCSCGLAEELEDEKKTKAATENAKSSCGNCYLGDAFRCSTCPYLGMPAFKPGEKVQLADNLLKSDI.

The interval 4 to 130 is N-terminal SAM-like domain; sequence FKGLQKSLYI…ETGSSARLSF (127 aa). A linker region spans residues 131-161; that stretch reads AKKSPSMNVWKISGDDEELIDEEELLDEEDK. Positions 172, 181, 184, and 186 each coordinate [2Fe-2S] cluster. Positions 172–186 are fe-S binding site A; the sequence is CSTTGKRKACKNCSC. Cysteine 209, cysteine 212, cysteine 220, and cysteine 223 together coordinate [4Fe-4S] cluster. 2 short sequence motifs (cx2C motif) span residues 209-212 and 220-223; these read CGNC and CSTC. Positions 209–223 are fe-S binding site B; the sequence is CGNCYLGDAFRCSTC.

The protein belongs to the anamorsin family. In terms of assembly, monomer. The cofactor is [2Fe-2S] cluster. [4Fe-4S] cluster serves as cofactor.

The protein localises to the cytoplasm. It is found in the mitochondrion intermembrane space. Its function is as follows. Component of the cytosolic iron-sulfur (Fe-S) protein assembly (CIA) machinery. Required for the maturation of extramitochondrial Fe-S proteins. Part of an electron transfer chain functioning in an early step of cytosolic Fe-S biogenesis, facilitating the de novo assembly of a [4Fe-4S] cluster on the cytosolic Fe-S scaffold complex. Electrons are transferred from NADPH via a FAD- and FMN-containing diflavin oxidoreductase. Together with the diflavin oxidoreductase, also required for the assembly of the diferric tyrosyl radical cofactor of ribonucleotide reductase (RNR), probably by providing electrons for reduction during radical cofactor maturation in the catalytic small subunit. The chain is Anamorsin homolog from Drosophila mojavensis (Fruit fly).